Consider the following 138-residue polypeptide: Ribulose bisphosphate carboxylase small subunit (138 aa).

This sequence belongs to the RuBisCO small chain family. As to quaternary structure, heterohexadecamer of 8 large and 8 small subunits.

The protein resides in the plastid. Its subcellular location is the chloroplast. Its function is as follows. RuBisCO catalyzes two reactions: the carboxylation of D-ribulose 1,5-bisphosphate, the primary event in carbon dioxide fixation, as well as the oxidative fragmentation of the pentose substrate in the photorespiration process. Both reactions occur simultaneously and in competition at the same active site. Although the small subunit is not catalytic it is essential for maximal activity. This chain is Ribulose bisphosphate carboxylase small subunit, found in Cyanidioschyzon merolae (strain NIES-3377 / 10D) (Unicellular red alga).